Consider the following 286-residue polypeptide: E3 ubiquitin-protein ligase RNF170 (286 aa).

Over methionine 1–aspartate 52 the chain is Lumenal. The helical transmembrane segment at glutamine 53–leucine 73 threads the bilayer. Topologically, residues arginine 74–arginine 229 are cytoplasmic. The RING-type zinc finger occupies cysteine 115–arginine 158. A helical transmembrane segment spans residues isoleucine 230 to glutamate 250. Alanine 251 is a topological domain (lumenal). The chain crosses the membrane as a helical span at residues leucine 252–isoleucine 272. Topologically, residues serine 273–arginine 286 are cytoplasmic.

In terms of assembly, constitutively associated with the ERLIN1/ERLIN 2 complex. Interacts with activated ITPR1.

It is found in the endoplasmic reticulum membrane. The catalysed reaction is S-ubiquitinyl-[E2 ubiquitin-conjugating enzyme]-L-cysteine + [acceptor protein]-L-lysine = [E2 ubiquitin-conjugating enzyme]-L-cysteine + N(6)-ubiquitinyl-[acceptor protein]-L-lysine.. Its pathway is protein modification; protein ubiquitination. E3 ubiquitin-protein ligase that plays an essential role in stimulus-induced inositol 1,4,5-trisphosphate receptor type 1 (ITPR1) ubiquitination and degradation via the endoplasmic reticulum-associated degradation (ERAD) pathway. Also involved in ITPR1 turnover in resting cells. Selectively inhibits the TLR3-triggered innate immune response by promoting the 'Lys-48'-linked polyubiquitination and degradation of TLR3. The polypeptide is E3 ubiquitin-protein ligase RNF170 (Rnf170) (Mus musculus (Mouse)).